The following is a 389-amino-acid chain: uncharacterized protein (389 aa).

The next 4 membrane-spanning stretches (helical) occupy residues 31-51 (LFIV…VEVI), 96-116 (IMQI…ALLV), 123-143 (APLV…MFPP), and 152-172 (MIDA…LPSS).

The protein to M.tuberculosis Rv2571c.

It localises to the cell membrane. This is an uncharacterized protein from Corynebacterium glutamicum (strain ATCC 13032 / DSM 20300 / JCM 1318 / BCRC 11384 / CCUG 27702 / LMG 3730 / NBRC 12168 / NCIMB 10025 / NRRL B-2784 / 534).